A 102-amino-acid chain; its full sequence is Acid shock protein (102 aa).

The N-terminal stretch at 1 to 21 is a signal peptide; sequence MKKVLALVVAAAMGLSSAAFA. A propeptide spanning residues 22–58 is cleaved from the precursor; sequence AETAITPAPTATTTKAAPAKTTHHKKQHKAAPAQKAQ. The span at 26–41 shows a compositional bias: low complexity; it reads ITPAPTATTTKAAPAK. The tract at residues 26–102 is disordered; sequence ITPAPTATTT…PAKPAAQPAA (77 aa). Basic residues predominate over residues 80–90; the sequence is AAKKHAKKHSH. The segment covering 91–102 has biased composition (low complexity); that stretch reads QQPAKPAAQPAA.

Belongs to the Asr family. Proteolytic processing gives rise to the active protein.

It localises to the periplasm. Required for growth and/or survival at acidic conditions. This is Acid shock protein from Escherichia coli O81 (strain ED1a).